The chain runs to 215 residues: Tricarboxylate transporter ALT9 (215 aa).

Solcar repeat units lie at residues 18-106 and 111-197; these read TTVV…LAPM and CGVS…VVRL. 3 consecutive transmembrane segments (helical) span residues 19-39, 112-132, and 182-202; these read TVVGNMVAGMCAGVAESVLVL, GVSTSVVAGALAGVITVYCTM, and VAGAIAFTLYEEVVRLTGFLV.

The protein belongs to the mitochondrial carrier (TC 2.A.29) family.

It is found in the mitochondrion inner membrane. The protein operates within mycotoxin biosynthesis. Functionally, tricarboxylate transporter; part of the gene cluster that mediates the biosynthesis of the host-selective toxins (HSTs) AAL-toxins, sphinganine-analog mycotoxins responsible for Alternaria stem canker on tomato by the tomato pathotype. The biosynthesis starts with the polyketide synthase ALT1-catalyzed C-16 carbon chain assembly from one starter acetyl-CoA unit with malonyl-CoA extender units. ALT1 also selectively transfers methyl groups at the first and the third cycle of chain elongation for AAL toxin. The C-16 polyketide chain is released from the enzyme by a nucleophilic attack of a carbanion, which is derived from R-carbon of glycin by decarboxylation, on the carbonyl carbon of polyketide acyl chain. This step is probably catalyzed by a pyridoxal 5'-phosphate-dependent aminoacyl transferase ALT4. The respective functions of the other enzymes encoded by the cluster have still to be elucidated. The sphingosine N-acyltransferase-like protein ALT7 seems not to act as a resistance/self-tolerance factor against the toxin in the toxin biosynthetic gene cluster, contrary to what is expected. The protein is Tricarboxylate transporter ALT9 of Alternaria alternata (Alternaria rot fungus).